The primary structure comprises 37 residues: MTVEGLTILRSPTFLTIIVLLMIVFGIAIVALLTQYV.

Residues 13–33 traverse the membrane as a helical segment; that stretch reads TFLTIIVLLMIVFGIAIVALL.

The protein localises to the host membrane. This is an uncharacterized protein from Acidianus convivator (ABV).